A 278-amino-acid polypeptide reads, in one-letter code: Dermonecrotic toxin LhSicTox-alphaIV1ii (278 aa).

Residue H5 is part of the active site. 2 residues coordinate Mg(2+): E25 and D27. H41 serves as the catalytic Nucleophile. Intrachain disulfides connect C45–C51 and C47–C192. D85 serves as a coordination point for Mg(2+).

Belongs to the arthropod phospholipase D family. Class II subfamily. Mg(2+) is required as a cofactor. In terms of tissue distribution, expressed by the venom gland.

The protein resides in the secreted. The catalysed reaction is an N-(acyl)-sphingosylphosphocholine = an N-(acyl)-sphingosyl-1,3-cyclic phosphate + choline. The enzyme catalyses an N-(acyl)-sphingosylphosphoethanolamine = an N-(acyl)-sphingosyl-1,3-cyclic phosphate + ethanolamine. It carries out the reaction a 1-acyl-sn-glycero-3-phosphocholine = a 1-acyl-sn-glycero-2,3-cyclic phosphate + choline. It catalyses the reaction a 1-acyl-sn-glycero-3-phosphoethanolamine = a 1-acyl-sn-glycero-2,3-cyclic phosphate + ethanolamine. Its function is as follows. Dermonecrotic toxins cleave the phosphodiester linkage between the phosphate and headgroup of certain phospholipids (sphingolipid and lysolipid substrates), forming an alcohol (often choline) and a cyclic phosphate. This toxin acts on sphingomyelin (SM). It may also act on ceramide phosphoethanolamine (CPE), lysophosphatidylcholine (LPC) and lysophosphatidylethanolamine (LPE), but not on lysophosphatidylserine (LPS), and lysophosphatidylglycerol (LPG). It acts by transphosphatidylation, releasing exclusively cyclic phosphate products as second products. Induces dermonecrosis, hemolysis, increased vascular permeability, edema, inflammatory response, and platelet aggregation. The sequence is that of Dermonecrotic toxin LhSicTox-alphaIV1ii from Loxosceles hirsuta (Recluse spider).